Consider the following 542-residue polypeptide: CTP synthase (542 aa).

Positions 1-265 (MARYVFITGG…DSEVLSAFGM (265 aa)) are amidoligase domain. Ser-13 is a binding site for CTP. Ser-13 serves as a coordination point for UTP. Residue 14-19 (SLGKGI) participates in ATP binding. Tyr-54 lines the L-glutamine pocket. Asp-71 contributes to the ATP binding site. The Mg(2+) site is built by Asp-71 and Glu-139. CTP contacts are provided by residues 146-148 (DIE), 186-191 (KTKPTQ), and Lys-222. UTP contacts are provided by residues 186 to 191 (KTKPTQ) and Lys-222. Residues 291-541 (TIAVVGKYTG…IEATVEQSRL (251 aa)) form the Glutamine amidotransferase type-1 domain. Ala-353 provides a ligand contact to L-glutamine. Catalysis depends on Cys-380, which acts as the Nucleophile; for glutamine hydrolysis. L-glutamine contacts are provided by residues 381 to 384 (FGMQ), Glu-404, and Arg-469. Residues His-514 and Glu-516 contribute to the active site.

Belongs to the CTP synthase family. As to quaternary structure, homotetramer.

The enzyme catalyses UTP + L-glutamine + ATP + H2O = CTP + L-glutamate + ADP + phosphate + 2 H(+). It carries out the reaction L-glutamine + H2O = L-glutamate + NH4(+). The catalysed reaction is UTP + NH4(+) + ATP = CTP + ADP + phosphate + 2 H(+). Its pathway is pyrimidine metabolism; CTP biosynthesis via de novo pathway; CTP from UDP: step 2/2. With respect to regulation, allosterically activated by GTP, when glutamine is the substrate; GTP has no effect on the reaction when ammonia is the substrate. The allosteric effector GTP functions by stabilizing the protein conformation that binds the tetrahedral intermediate(s) formed during glutamine hydrolysis. Inhibited by the product CTP, via allosteric rather than competitive inhibition. In terms of biological role, catalyzes the ATP-dependent amination of UTP to CTP with either L-glutamine or ammonia as the source of nitrogen. Regulates intracellular CTP levels through interactions with the four ribonucleotide triphosphates. The sequence is that of CTP synthase from Bartonella henselae (strain ATCC 49882 / DSM 28221 / CCUG 30454 / Houston 1) (Rochalimaea henselae).